Reading from the N-terminus, the 489-residue chain is Coiled-coil domain-containing protein 77 (489 aa).

At Ser38 the chain carries Phosphoserine. Coiled coils occupy residues 57–120 (SQEL…QVCL) and 212–487 (ERHQ…NALR).

This is Coiled-coil domain-containing protein 77 (Ccdc77) from Mus musculus (Mouse).